Here is a 320-residue protein sequence, read N- to C-terminus: Chitinase 3 (320 aa).

The first 18 residues, 1–18 (MRALALAVVAMAVVAVRG), serve as a signal peptide directing secretion. One can recognise a Chitin-binding type-1 domain in the interval 19-59 (EQCGSQAGGALCPNCLCCSQYGWCGSTSDYCGAGCQSQCSG). Disulfide bonds link cysteine 21-cysteine 36, cysteine 30-cysteine 42, cysteine 33-cysteine 61, cysteine 35-cysteine 49, cysteine 53-cysteine 57, cysteine 97-cysteine 159, cysteine 172-cysteine 180, and cysteine 279-cysteine 311. The active-site Proton donor is glutamate 141.

This sequence belongs to the glycosyl hydrolase 19 family. Chitinase class I subfamily. Expressed at low levels in roots, leaves, sheaths and meristems.

It catalyses the reaction Random endo-hydrolysis of N-acetyl-beta-D-glucosaminide (1-&gt;4)-beta-linkages in chitin and chitodextrins.. Its function is as follows. Hydrolyzes chitin and plays a role in defense against fungal pathogens containing chitin. Inhibits the growth of T.reesei fungus on plate assay. This Oryza sativa subsp. japonica (Rice) protein is Chitinase 3 (Cht3).